The sequence spans 174 residues: Nucleoside-triphosphatase THEP1 (174 aa).

ATP-binding positions include 7 to 14 (GRPGVGKT) and 94 to 101 (LIIVDEIG).

The protein belongs to the THEP1 NTPase family.

It carries out the reaction a ribonucleoside 5'-triphosphate + H2O = a ribonucleoside 5'-diphosphate + phosphate + H(+). Functionally, has nucleotide phosphatase activity towards ATP, GTP, CTP, TTP and UTP. May hydrolyze nucleoside diphosphates with lower efficiency. The polypeptide is Nucleoside-triphosphatase THEP1 (Thermotoga maritima (strain ATCC 43589 / DSM 3109 / JCM 10099 / NBRC 100826 / MSB8)).